The primary structure comprises 288 residues: Protoheme IX farnesyltransferase 2 (288 aa).

Helical transmembrane passes span 8-28, 36-56, 85-105, 108-128, 131-151, 152-172, 211-231, 233-252, and 267-287; these read ITKP…FFLA, LMLF…GCVV, VAFV…FQLV, LSAV…TMWY, NSVY…LVGY, LAVT…FCLW, AYVV…EAGY, YLAV…FRSI, and VSLL…IPLA.

The protein belongs to the UbiA prenyltransferase family. Protoheme IX farnesyltransferase subfamily.

Its subcellular location is the cell inner membrane. It catalyses the reaction heme b + (2E,6E)-farnesyl diphosphate + H2O = Fe(II)-heme o + diphosphate. Its pathway is porphyrin-containing compound metabolism; heme O biosynthesis; heme O from protoheme: step 1/1. In terms of biological role, converts heme B (protoheme IX) to heme O by substitution of the vinyl group on carbon 2 of heme B porphyrin ring with a hydroxyethyl farnesyl side group. This Vibrio parahaemolyticus serotype O3:K6 (strain RIMD 2210633) protein is Protoheme IX farnesyltransferase 2.